Consider the following 509-residue polypeptide: Zinc finger CCCH-type with G patch domain-containing protein (509 aa).

The C3H1-type zinc-finger motif lies at 155–178; it reads PCNYYLEGECRFDEIRCRYSHGAL. Residues 254–277 are disordered; the sequence is EDELTSEDSSSSPHDESSDEIDSD. Residues 310 to 356 form the G-patch domain; it reads TRGIGSKLMEKMGYIHGTGLGSEGRGIVTPVSAQILPQGRSLDACME. The tract at residues 407 to 430 is disordered; it reads LGGGESRHQGDQAAKKAKTNDLQQ. Over residues 411-420 the composition is skewed to basic and acidic residues; that stretch reads ESRHQGDQAA.

The protein localises to the nucleus. In terms of biological role, transcription repressor. The polypeptide is Zinc finger CCCH-type with G patch domain-containing protein (Drosophila pseudoobscura pseudoobscura (Fruit fly)).